The chain runs to 151 residues: uncharacterized protein (151 aa).

Positions 48 to 151 (RPPGWQPPVN…SKFDHTRKKF (104 aa)) are disordered. Over residues 55–77 (PVNTGPTSPVSINASNAAPSNLK) the composition is skewed to polar residues. Composition is skewed to low complexity over residues 85 to 105 (PRRL…RLPS) and 123 to 141 (KSPS…SLLR).

This is an uncharacterized protein from Schizosaccharomyces pombe (strain 972 / ATCC 24843) (Fission yeast).